The chain runs to 74 residues: MKFQVIAAVLLIAFCLCVVVTARMELQDVEDVENGFQKRRSCIDTIPQSRCTAFQCKHSMKYRLSFCRKTCGTC.

The first 22 residues, 1-22, serve as a signal peptide directing secretion; the sequence is MKFQVIAAVLLIAFCLCVVVTA. The propeptide occupies 23 to 39; sequence RMELQDVEDVENGFQKR. The 33-residue stretch at 42 to 74 folds into the ShKT domain; that stretch reads CIDTIPQSRCTAFQCKHSMKYRLSFCRKTCGTC. Intrachain disulfides connect Cys42–Cys74, Cys51–Cys67, and Cys56–Cys71.

This sequence belongs to the sea anemone type 1 potassium channel toxin family. Type 1a subfamily.

Its subcellular location is the secreted. It localises to the nematocyst. In terms of biological role, inhibits voltage-gated potassium channels (Kv) with higher potency for Kv1.1/KCNA1 and Kv1.3/KCNA3. This chain is Kappa-stichotoxin-Shd5a, found in Stichodactyla haddoni (Saddle carpet anemone).